We begin with the raw amino-acid sequence, 596 residues long: Phosphoenolpyruvate carboxykinase [GTP] (596 aa).

Substrate-binding positions include Arg77 and 205–207; that span reads YGG. Mn(2+) contacts are provided by Lys214 and His234. A substrate-binding site is contributed by Ser256. 257–262 is a binding site for GTP; it reads ACGKTN. Cys258 is a catalytic residue. Asp283 is a binding site for Mn(2+). The interval 362-388 is disordered; that stretch reads KKGSTEKAAHPNSRFTAPAKNNPAISP. Substrate is bound at residue 373–375; that stretch reads NSR. Residues Arg375, Arg406, and 499–502 each bind GTP; that span reads YGDN.

Belongs to the phosphoenolpyruvate carboxykinase [GTP] family. In terms of assembly, monomer. Mn(2+) is required as a cofactor.

It localises to the cytoplasm. The catalysed reaction is oxaloacetate + GTP = phosphoenolpyruvate + GDP + CO2. It participates in carbohydrate biosynthesis; gluconeogenesis. Catalyzes the conversion of oxaloacetate (OAA) to phosphoenolpyruvate (PEP), the rate-limiting step in the metabolic pathway that produces glucose from lactate and other precursors derived from the citric acid cycle. The polypeptide is Phosphoenolpyruvate carboxykinase [GTP] (Anaeromyxobacter dehalogenans (strain 2CP-C)).